The chain runs to 176 residues: ATP-dependent protease subunit HslV (176 aa).

Residue Thr-2 is part of the active site. Na(+) is bound by residues Gly-157, Cys-160, and Thr-163.

It belongs to the peptidase T1B family. HslV subfamily. A double ring-shaped homohexamer of HslV is capped on each side by a ring-shaped HslU homohexamer. The assembly of the HslU/HslV complex is dependent on binding of ATP.

The protein resides in the cytoplasm. The enzyme catalyses ATP-dependent cleavage of peptide bonds with broad specificity.. With respect to regulation, allosterically activated by HslU binding. Functionally, protease subunit of a proteasome-like degradation complex believed to be a general protein degrading machinery. The chain is ATP-dependent protease subunit HslV from Pseudomonas syringae pv. tomato (strain ATCC BAA-871 / DC3000).